Consider the following 474-residue polypeptide: Mercuric reductase (474 aa).

FAD-binding residues include alanine 19, glycine 39, and threonine 44. Cysteine 45 and cysteine 50 are disulfide-bonded. FAD is bound by residues lysine 54, alanine 119, aspartate 315, and valine 323. Positions 471 and 472 each coordinate Hg(2+).

The protein belongs to the class-I pyridine nucleotide-disulfide oxidoreductase family. As to quaternary structure, homodimer. FAD serves as cofactor.

It carries out the reaction Hg + NADP(+) + H(+) = Hg(2+) + NADPH. Its function is as follows. Resistance to Hg(2+) in bacteria appears to be governed by a specialized system which includes mercuric reductase. MerA protein is responsible for volatilizing mercury as Hg(0). This chain is Mercuric reductase (merA), found in Streptomyces lividans.